The primary structure comprises 139 residues: MEFHDDKKNELQKKEEIITEAIDTLFQSSAFGNLINGFQNLINSSLKDVQTTIHVRERDTGLYIDITIPATFRDGEIVVDVKSRYLHVTLQEKQKHQNEATFTSMTRTVQLPYEVRQEDMETSWNEQTMTLFFPKNKHE.

The N-terminal stretch at 1 to 32 is a signal peptide; sequence MEFHDDKKNELQKKEEIITEAIDTLFQSSAFG. The sHSP domain maps to 44 to 139; that stretch reads SSLKDVQTTI…TLFFPKNKHE (96 aa).

The protein belongs to the small heat shock protein (HSP20) family.

This is an uncharacterized protein from Bacillus subtilis (strain 168).